A 367-amino-acid polypeptide reads, in one-letter code: Epoxide hydrolase 3 (367 aa).

A helical transmembrane segment spans residues 22-42 (ALVMSLVYLAALVAAFVYSCI). Asp-180 (nucleophile) is an active-site residue. The Proton donor role is filled by Tyr-288. Residue His-344 is the Proton acceptor of the active site.

This sequence belongs to the AB hydrolase superfamily. Epoxide hydrolase family. In terms of tissue distribution, predominantly expressed in skin, esophagus, lung and tongue and to a lesser extent in pancreas and eye.

It localises to the microsome membrane. The catalysed reaction is an epoxide + H2O = an ethanediol. It catalyses the reaction 9,10-epoxyoctadecanoate + H2O = 9,10-dihydroxyoctadecanoate. It carries out the reaction 9,10-epoxy-(12Z)-octadecenoate + H2O = 9,10-dihydroxy-(12Z)-octadecenoate. The enzyme catalyses 8,9-epoxy-(5Z,11Z,14Z)-eicosatrienoate + H2O = 8,9-dihydroxy-(5Z,11Z,14Z)-eicosatrienoate. The catalysed reaction is 11,12-epoxy-(5Z,8Z,14Z)-eicosatrienoate + H2O = 11,12-dihydroxy-(5Z,8Z,14Z)-eicosatrienoate. It catalyses the reaction 14,15-epoxy-(5Z,8Z,11Z)-eicosatrienoate + H2O = 14,15-dihydroxy-(5Z,8Z,11Z)-eicosatrienoate. With respect to regulation, inhibited by 1-(1-acetylpiperidin-4-yl)-3-(4-(trifl uoromethoxy)phenyl)urea (TPAU), 1-cyclohexyl-3-dodecylurea (CDU), 12-(3-adamantan-1-yl-ureido)-dodecanoic acid (AUDA), 1-((3S, 5S, 7S)-adamantan-1-yl)-3-(5-(2-(2-ethoxyethoxy) ethoxy)pentyl)urea (AEPU) and to a lesser extent by 8-(3-((3S, 5S, 7S)-adamantan-1-yl)ureido) octanoic acid (AUOA). Catalyzes the hydrolysis of epoxide-containing fatty acids. Active in vitro against epoxyeicosatrienoic acids (EETs) including 8,9-EET, 9,10-EET, 11,12-EET and 14,15-EET and leukotoxin. The sequence is that of Epoxide hydrolase 3 (Ephx3) from Mus musculus (Mouse).